Reading from the N-terminus, the 224-residue chain is Type VII secretion system protein EsaE (224 aa).

In terms of assembly, interacts with EssD.

Component of the type VII secretion system (Ess). Plays a role in Esx protein secretion. Plays an essential role in the processing and secretion of EssD. The protein is Type VII secretion system protein EsaE of Staphylococcus aureus (strain USA300).